The sequence spans 169 residues: Putative outer membrane protein BBA03 (169 aa).

Its subcellular location is the cell outer membrane. The protein is Putative outer membrane protein BBA03 of Borreliella burgdorferi (strain ATCC 35210 / DSM 4680 / CIP 102532 / B31) (Borrelia burgdorferi).